A 755-amino-acid chain; its full sequence is 1,4-alpha-glucan branching enzyme GlgB (755 aa).

D431 functions as the Nucleophile in the catalytic mechanism. Residue E484 is the Proton donor of the active site.

This sequence belongs to the glycosyl hydrolase 13 family. GlgB subfamily. In terms of assembly, monomer.

The enzyme catalyses Transfers a segment of a (1-&gt;4)-alpha-D-glucan chain to a primary hydroxy group in a similar glucan chain.. It participates in glycan biosynthesis; glycogen biosynthesis. Its function is as follows. Catalyzes the formation of the alpha-1,6-glucosidic linkages in glycogen by scission of a 1,4-alpha-linked oligosaccharide from growing alpha-1,4-glucan chains and the subsequent attachment of the oligosaccharide to the alpha-1,6 position. This chain is 1,4-alpha-glucan branching enzyme GlgB, found in Prochlorococcus marinus (strain NATL1A).